The following is a 498-amino-acid chain: ATP synthase subunit beta, chloroplastic (498 aa).

Position 172–179 (172–179 (GGAGVGKT)) interacts with ATP.

It belongs to the ATPase alpha/beta chains family. As to quaternary structure, F-type ATPases have 2 components, CF(1) - the catalytic core - and CF(0) - the membrane proton channel. CF(1) has five subunits: alpha(3), beta(3), gamma(1), delta(1), epsilon(1). CF(0) has four main subunits: a(1), b(1), b'(1) and c(9-12).

Its subcellular location is the plastid. The protein resides in the chloroplast thylakoid membrane. The enzyme catalyses ATP + H2O + 4 H(+)(in) = ADP + phosphate + 5 H(+)(out). Its function is as follows. Produces ATP from ADP in the presence of a proton gradient across the membrane. The catalytic sites are hosted primarily by the beta subunits. In Triticum aestivum (Wheat), this protein is ATP synthase subunit beta, chloroplastic.